Here is a 138-residue protein sequence, read N- to C-terminus: Large ribosomal subunit protein uL16 (138 aa).

Positions 1–15 (MLSPKKVKYRKKQRG) are enriched in basic residues. Residues 1–21 (MLSPKKVKYRKKQRGRLSGEA) are disordered.

It belongs to the universal ribosomal protein uL16 family. Part of the 50S ribosomal subunit.

Its function is as follows. Binds 23S rRNA and is also seen to make contacts with the A and possibly P site tRNAs. The chain is Large ribosomal subunit protein uL16 from Borreliella burgdorferi (strain ATCC 35210 / DSM 4680 / CIP 102532 / B31) (Borrelia burgdorferi).